The following is a 276-amino-acid chain: Rhomboid protease GlpG (276 aa).

Transmembrane regions (helical) follow at residues 94–114 (GPFTWAILLICIAVFILQNLL), 142–162 (AFMHFSLMHILFNLLWWWYLG), 169–189 (IGSGKLVVITVISALLSGFVQ), 192–212 (FSGPWFGGLSGVVYALMGYVW), 229–249 (LILFSLVWLIAGWFDVFGMAI), and 252–272 (GAHVAGLATGLAMAFVDTLHG). Residue Ser201 is the Nucleophile of the active site. The active site involves His254.

Belongs to the peptidase S54 family.

It is found in the cell inner membrane. It catalyses the reaction Cleaves type-1 transmembrane domains using a catalytic dyad composed of serine and histidine that are contributed by different transmembrane domains.. Rhomboid-type serine protease that catalyzes intramembrane proteolysis. This chain is Rhomboid protease GlpG, found in Klebsiella pneumoniae subsp. pneumoniae (strain ATCC 700721 / MGH 78578).